A 423-amino-acid polypeptide reads, in one-letter code: 26S proteasome regulatory subunit 6A homolog (423 aa).

An ATP-binding site is contributed by 211-218 (GPPGTGKT).

The protein belongs to the AAA ATPase family.

It localises to the cytoplasm. Its subcellular location is the nucleus. Its function is as follows. The 26S proteasome is involved in the ATP-dependent degradation of ubiquitinated proteins. The regulatory (or ATPase) complex confers ATP dependency and substrate specificity to the 26S complex. This chain is 26S proteasome regulatory subunit 6A homolog (TBP1), found in Solanum lycopersicum (Tomato).